Reading from the N-terminus, the 181-residue chain is Acireductone dioxygenase (181 aa).

Residues methionine 1–serine 10 are compositionally biased toward acidic residues. Residues methionine 1 to serine 23 form a disordered region. Fe(2+) contacts are provided by histidine 82, histidine 84, glutamate 88, and histidine 128. Residues histidine 82, histidine 84, glutamate 88, and histidine 128 each contribute to the Ni(2+) site.

This sequence belongs to the acireductone dioxygenase (ARD) family. The cofactor is Fe(2+). Ni(2+) serves as cofactor.

The protein localises to the cytoplasm. Its subcellular location is the nucleus. It carries out the reaction 1,2-dihydroxy-5-(methylsulfanyl)pent-1-en-3-one + O2 = 4-methylsulfanyl-2-oxobutanoate + formate + 2 H(+). The enzyme catalyses 1,2-dihydroxy-5-(methylsulfanyl)pent-1-en-3-one + O2 = 3-(methylsulfanyl)propanoate + CO + formate + 2 H(+). It participates in amino-acid biosynthesis; L-methionine biosynthesis via salvage pathway; L-methionine from S-methyl-5-thio-alpha-D-ribose 1-phosphate: step 5/6. Catalyzes 2 different reactions between oxygen and the acireductone 1,2-dihydroxy-3-keto-5-methylthiopentene (DHK-MTPene) depending upon the metal bound in the active site. Fe-containing acireductone dioxygenase (Fe-ARD) produces formate and 2-keto-4-methylthiobutyrate (KMTB), the alpha-ketoacid precursor of methionine in the methionine recycle pathway. Ni-containing acireductone dioxygenase (Ni-ARD) produces methylthiopropionate, carbon monoxide and formate, and does not lie on the methionine recycle pathway. The chain is Acireductone dioxygenase from Puccinia graminis f. sp. tritici (strain CRL 75-36-700-3 / race SCCL) (Black stem rust fungus).